A 531-amino-acid polypeptide reads, in one-letter code: Poly(A)-specific ribonuclease PNLDC1 (531 aa).

Mg(2+) contacts are provided by Asp28, Glu30, Asp271, and Asp365. Residues 506 to 526 traverse the membrane as a helical segment; it reads ITCLLQVCSIVTTWAMIAFLL.

The protein belongs to the CAF1 family. Requires Mg(2+) as cofactor. As to expression, specifically expressed in embryonic stem cells. Highly expressed in testis.

The protein resides in the endoplasmic reticulum membrane. The enzyme catalyses Exonucleolytic cleavage of poly(A) to 5'-AMP.. In terms of biological role, 3'-exoribonuclease that has a preference for poly(A) tails of mRNAs, thereby efficiently degrading poly(A) tails. Exonucleolytic degradation of the poly(A) tail is often the first step in the decay of eukaryotic mRNAs and is also used to silence certain maternal mRNAs translationally during oocyte maturation and early embryonic development. May act as a regulator of multipotency in embryonic stem cells. Is a critical factor for proper spermatogenesis, involved in pre-piRNAs processing to generate mature piRNAs. This Mus musculus (Mouse) protein is Poly(A)-specific ribonuclease PNLDC1.